Consider the following 86-residue polypeptide: UPF0457 protein SERP1772 (86 aa).

The protein belongs to the UPF0457 family.

The chain is UPF0457 protein SERP1772 from Staphylococcus epidermidis (strain ATCC 35984 / DSM 28319 / BCRC 17069 / CCUG 31568 / BM 3577 / RP62A).